Reading from the N-terminus, the 84-residue chain is Small ribosomal subunit protein uS17 (84 aa).

Belongs to the universal ribosomal protein uS17 family. As to quaternary structure, part of the 30S ribosomal subunit.

In terms of biological role, one of the primary rRNA binding proteins, it binds specifically to the 5'-end of 16S ribosomal RNA. This is Small ribosomal subunit protein uS17 from Clostridioides difficile (strain 630) (Peptoclostridium difficile).